A 104-amino-acid polypeptide reads, in one-letter code: Large ribosomal subunit protein uL24 (104 aa).

It belongs to the universal ribosomal protein uL24 family. As to quaternary structure, part of the 50S ribosomal subunit.

Functionally, one of two assembly initiator proteins, it binds directly to the 5'-end of the 23S rRNA, where it nucleates assembly of the 50S subunit. In terms of biological role, one of the proteins that surrounds the polypeptide exit tunnel on the outside of the subunit. In Shewanella pealeana (strain ATCC 700345 / ANG-SQ1), this protein is Large ribosomal subunit protein uL24.